Here is a 450-residue protein sequence, read N- to C-terminus: Chromosomal replication initiator protein DnaA (450 aa).

Positions 1–69 (MHDVWRQATE…VGALSVTAGK (69 aa)) are domain I, interacts with DnaA modulators. Residues 69 to 113 (KKYFIELVVQEEDQNAEVPQAEDLIIKGHQEIEQPVTSQPETSSS) form a domain II region. Residues 114 to 330 (SLNPKYTFEL…GMLIRLGAYS (217 aa)) form a domain III, AAA+ region region. Gly-158, Gly-160, Lys-161, and Ser-162 together coordinate ATP. Residues 331–450 (SLQGIPITLD…IEDIKLILLK (120 aa)) are domain IV, binds dsDNA.

It belongs to the DnaA family. In terms of assembly, oligomerizes as a right-handed, spiral filament on DNA at oriC.

Its subcellular location is the cytoplasm. In terms of biological role, plays an essential role in the initiation and regulation of chromosomal replication. ATP-DnaA binds to the origin of replication (oriC) to initiate formation of the DNA replication initiation complex once per cell cycle. Binds the DnaA box (a 9 base pair repeat at the origin) and separates the double-stranded (ds)DNA. Forms a right-handed helical filament on oriC DNA; dsDNA binds to the exterior of the filament while single-stranded (ss)DNA is stabiized in the filament's interior. The ATP-DnaA-oriC complex binds and stabilizes one strand of the AT-rich DNA unwinding element (DUE), permitting loading of DNA polymerase. After initiation quickly degrades to an ADP-DnaA complex that is not apt for DNA replication. Binds acidic phospholipids. This chain is Chromosomal replication initiator protein DnaA, found in Pelobacter propionicus (strain DSM 2379 / NBRC 103807 / OttBd1).